A 569-amino-acid polypeptide reads, in one-letter code: uncharacterized protein (569 aa).

An N-terminal signal peptide occupies residues 1 to 24 (MKFQRKYWGLLSTLGVSSAVALSA). Residue Cys-25 is the site of N-palmitoyl cysteine attachment. Cys-25 carries the S-diacylglycerol cysteine lipid modification. Disordered stretches follow at residues 111 to 137 (SNMK…EWEV) and 242 to 267 (GKNG…KKIE). Low complexity-rich tracts occupy residues 119–130 (SSSSSSTGNNGS) and 249–260 (KKMTTDSSSTQQ).

This sequence to M.pneumoniae MPN_456 and M.genitalium MG321 N-terminal region.

The protein localises to the cell membrane. This is an uncharacterized protein from Mycoplasma pneumoniae (strain ATCC 29342 / M129 / Subtype 1) (Mycoplasmoides pneumoniae).